A 292-amino-acid polypeptide reads, in one-letter code: 2-(5''-triphosphoribosyl)-3'-dephosphocoenzyme-A synthase (292 aa).

Belongs to the CitG/MdcB family.

It catalyses the reaction 3'-dephospho-CoA + ATP = 2'-(5''-triphospho-alpha-D-ribosyl)-3'-dephospho-CoA + adenine. Its function is as follows. Catalyzes the formation of 2-(5''-triphosphoribosyl)-3'-dephosphocoenzyme-A, the precursor of the prosthetic group of the holo-acyl carrier protein (gamma chain) of citrate lyase, from ATP and dephospho-CoA. This Escherichia coli O127:H6 (strain E2348/69 / EPEC) protein is 2-(5''-triphosphoribosyl)-3'-dephosphocoenzyme-A synthase.